The sequence spans 380 residues: Alcohol dehydrogenase 2 (380 aa).

Positions 48, 50, 70, 100, 103, 106, 114, and 178 each coordinate Zn(2+). Residues Thr-50 and His-70 each contribute to the an alcohol site. Thr-50 provides a ligand contact to NAD(+). NAD(+)-binding positions include 203–208, Asp-227, Arg-232, Thr-273, Val-296, 296–298, Phe-323, and Arg-373; these read GLGAVG and VGV.

It belongs to the zinc-containing alcohol dehydrogenase family. Homodimer. Homotetramer. It depends on Zn(2+) as a cofactor.

It localises to the cytoplasm. The catalysed reaction is a primary alcohol + NAD(+) = an aldehyde + NADH + H(+). It carries out the reaction a secondary alcohol + NAD(+) = a ketone + NADH + H(+). In Solanum lycopersicum (Tomato), this protein is Alcohol dehydrogenase 2 (ADH2).